Here is a 317-residue protein sequence, read N- to C-terminus: Melanocyte-stimulating hormone receptor (317 aa).

Residues 1-37 are Extracellular-facing; sequence MPVQGSQRRLLGSLNSTPTATPHLGLAANQTGARCLE. N-linked (GlcNAc...) asparagine glycosylation is present at Asn29. Residues 38–63 traverse the membrane as a helical segment; the sequence is VSIPDGLFLSLGLVSLVENVLVVTAI. Residues 64–72 lie on the Cytoplasmic side of the membrane; sequence AKNRNLHSP. A helical membrane pass occupies residues 73 to 93; it reads MYCFICCLALSDLLVSGSNML. Residues 94–118 lie on the Extracellular side of the membrane; that stretch reads ETAVTLLLEAGALAARAAVVQQLDN. A helical membrane pass occupies residues 119–140; sequence VIDVITCSSMLSSLCFLGAIAV. Residues 141–163 lie on the Cytoplasmic side of the membrane; the sequence is DRYISIFYALRYHSIVTLPRARR. Residues 164-183 traverse the membrane as a helical segment; sequence AVAAIWVASVLFSMLFIAYY. Over 184–191 the chain is Extracellular; the sequence is DHAAVLLC. The helical transmembrane segment at 192 to 211 threads the bilayer; the sequence is LVVFFLAMLVLMAVLYVHML. Topologically, residues 212-240 are cytoplasmic; that stretch reads ARACQHAQGIARLHKRQRPAHQGFGLKGA. The chain crosses the membrane as a helical span at residues 241–266; it reads ATLTILLGIFFLCWGPFFLHLTLIVL. At 267–279 the chain is on the extracellular side; sequence CPQHPTCSCIFKN. Residues 280-300 traverse the membrane as a helical segment; sequence FNLFLALIICNAIIDPLIYAF. Topologically, residues 301 to 317 are cytoplasmic; sequence RSQELRRTLKEVLLCSW. The S-palmitoyl cysteine moiety is linked to residue Cys315.

Belongs to the G-protein coupled receptor 1 family. Interacts with MGRN1, but does not undergo MGRN1-mediated ubiquitination; this interaction competes with GNAS-binding and thus inhibits agonist-induced cAMP production. Interacts with OPN3; the interaction results in a decrease in MC1R-mediated cAMP signaling and ultimately a decrease in melanin production in melanocytes.

Its subcellular location is the cell membrane. Its function is as follows. Receptor for MSH (alpha, beta and gamma) and ACTH. The activity of this receptor is mediated by G proteins which activate adenylate cyclase. Mediates melanogenesis, the production of eumelanin (black/brown) and phaeomelanin (red/yellow), via regulation of cAMP signaling in melanocytes. The chain is Melanocyte-stimulating hormone receptor (MC1R) from Miopithecus talapoin (Angolan talapoin).